A 709-amino-acid polypeptide reads, in one-letter code: Polyribonucleotide nucleotidyltransferase (709 aa).

Mg(2+) is bound by residues Asp485 and Asp491. A KH domain is found at 552–611 (PRIYTMKIDPKKIKDVIGKGGATIRSLTEETGTSIDIDDDGTVKIAAVDSNAAKNVMGRI). The S1 motif domain occupies 621-689 (GAIYKGKVTR…RQGRIRLTMK (69 aa)).

Belongs to the polyribonucleotide nucleotidyltransferase family. As to quaternary structure, component of the RNA degradosome, which is a multiprotein complex involved in RNA processing and mRNA degradation. The cofactor is Mg(2+).

It is found in the cytoplasm. It carries out the reaction RNA(n+1) + phosphate = RNA(n) + a ribonucleoside 5'-diphosphate. Its function is as follows. Involved in mRNA degradation. Catalyzes the phosphorolysis of single-stranded polyribonucleotides processively in the 3'- to 5'-direction. This chain is Polyribonucleotide nucleotidyltransferase, found in Haemophilus influenzae (strain PittGG).